Reading from the N-terminus, the 145-residue chain is 3-hydroxyacyl-[acyl-carrier-protein] dehydratase FabZ (145 aa).

The active site involves His-47.

The protein belongs to the thioester dehydratase family. FabZ subfamily.

Its subcellular location is the cytoplasm. The enzyme catalyses a (3R)-hydroxyacyl-[ACP] = a (2E)-enoyl-[ACP] + H2O. Functionally, involved in unsaturated fatty acids biosynthesis. Catalyzes the dehydration of short chain beta-hydroxyacyl-ACPs and long chain saturated and unsaturated beta-hydroxyacyl-ACPs. The sequence is that of 3-hydroxyacyl-[acyl-carrier-protein] dehydratase FabZ from Vesicomyosocius okutanii subsp. Calyptogena okutanii (strain HA).